We begin with the raw amino-acid sequence, 510 residues long: Histidine ammonia-lyase (510 aa).

The segment at residues Ala-143 to Gly-145 is a cross-link (5-imidazolinone (Ala-Gly)). 2,3-didehydroalanine (Ser) is present on Ser-144.

It belongs to the PAL/histidase family. Post-translationally, contains an active site 4-methylidene-imidazol-5-one (MIO), which is formed autocatalytically by cyclization and dehydration of residues Ala-Ser-Gly.

The protein resides in the cytoplasm. It carries out the reaction L-histidine = trans-urocanate + NH4(+). The protein operates within amino-acid degradation; L-histidine degradation into L-glutamate; N-formimidoyl-L-glutamate from L-histidine: step 1/3. The chain is Histidine ammonia-lyase from Aliivibrio fischeri (strain MJ11) (Vibrio fischeri).